A 147-amino-acid chain; its full sequence is Hemoglobin subunit gamma (147 aa).

The Globin domain occupies 3–147; that stretch reads NFTAEDKAAI…VASALASRYH (145 aa). Histidine 64 and histidine 93 together coordinate heme b.

It belongs to the globin family. In terms of assembly, heterotetramer of two alpha chains and two gamma chains in fetal hemoglobin (Hb F). As to expression, red blood cells.

Gamma chains make up the fetal hemoglobin F, in combination with alpha chains. This is Hemoglobin subunit gamma (HBG1) from Callithrix jacchus (White-tufted-ear marmoset).